We begin with the raw amino-acid sequence, 700 residues long: Probable pre-mRNA-splicing factor ATP-dependent RNA helicase DEAH4 (700 aa).

Ala-2 carries the post-translational modification N-acetylalanine. Residues 14–178 (VETVEKNSVV…FSGCPVLNVP (165 aa)) enclose the Helicase ATP-binding domain. 27–34 (GETGSGKS) contributes to the ATP binding site. Positions 124–127 (DEAH) match the DEAH box motif. Residues 200 to 377 (SLKVAIDIHV…GSVLYLKSLD (178 aa)) enclose the Helicase C-terminal domain. Disordered regions lie at residues 463–486 (PARS…NGSG) and 654–682 (GPAP…SENV).

It belongs to the DEAD box helicase family. DEAH subfamily. PRP22 sub-subfamily.

The catalysed reaction is ATP + H2O = ADP + phosphate + H(+). In terms of biological role, may be involved in pre-mRNA splicing. The sequence is that of Probable pre-mRNA-splicing factor ATP-dependent RNA helicase DEAH4 from Arabidopsis thaliana (Mouse-ear cress).